The following is a 636-amino-acid chain: Alpha-L-iduronidase (636 aa).

A signal peptide spans 1–16; that stretch reads MLSLLLVLTTLARIHA. Alpha-D-mannopyranose contacts are provided by proline 39, isoleucine 43, and histidine 45. Alpha-L-iduronate contacts are provided by histidine 78, asparagine 169, and glutamate 170. Glutamate 170 serves as the catalytic Proton donor. Residue asparagine 180 is glycosylated (N-linked (GlcNAc...) asparagine). Lysine 257 serves as a coordination point for alpha-L-iduronate. Asparagine 268 is a glycosylation site (N-linked (GlcNAc...) asparagine). 2 residues coordinate alpha-L-iduronate: glutamate 293 and glycine 299. The active-site Nucleophile is the glutamate 293. Tryptophan 300 is a binding site for alpha-D-mannopyranose. Residues aspartate 342 and arginine 356 each coordinate alpha-L-iduronate. Asparagine 365, asparagine 448, asparagine 453, and asparagine 483 each carry an N-linked (GlcNAc...) asparagine glycan. Residues cysteine 529 and cysteine 565 are joined by a disulfide bond. N-linked (GlcNAc...) asparagine glycosylation occurs at asparagine 622.

This sequence belongs to the glycosyl hydrolase 39 family.

It is found in the lysosome. The catalysed reaction is Hydrolysis of unsulfated alpha-L-iduronosidic linkages in dermatan sulfate.. Its function is as follows. Essential lysosomal hydrolase responsible for the degradation of glycosaminoglycans (GAG) such as heparan sulfate. Required for lysosome function and autophagy. Consequently, has an essential role in the development, maintenance and function of various cells, tissues, and organs, including the muscles and the central nervous system (CNS). The protein is Alpha-L-iduronidase of Drosophila melanogaster (Fruit fly).